A 225-amino-acid chain; its full sequence is Germin-like protein 8-3 (225 aa).

The signal sequence occupies residues methionine 1–alanine 23. The cysteines at positions 33 and 48 are disulfide-linked. N-linked (GlcNAc...) asparagine glycans are attached at residues asparagine 53 and asparagine 78. The Cupin type-1 domain maps to phenylalanine 60–aspartate 213. Histidine 111, histidine 113, glutamate 118, and histidine 158 together coordinate Mn(2+).

This sequence belongs to the germin family. Oligomer (believed to be a pentamer but probably hexamer).

Its subcellular location is the secreted. It localises to the extracellular space. The protein resides in the apoplast. Functionally, plays a role in broad-spectrum disease resistance. Probably has no oxalate oxidase activity even if the active site is conserved. This chain is Germin-like protein 8-3 (GER2), found in Oryza sativa subsp. japonica (Rice).